A 738-amino-acid chain; its full sequence is Leucine-rich repeat flightless-interacting protein 1 (738 aa).

T2 bears the N-acetylthreonine mark. Phosphoserine is present on S16. Basic and acidic residues predominate over residues 40 to 65 (IRMKELERQQKEVEERPDKDFAEKGS). Positions 40–98 (IRMKELERQQKEVEERPDKDFAEKGSRNMPSLSAATLASLGGTSSRRGSGDTSISMDTE) are disordered. Residues 78-94 (SLGGTSSRRGSGDTSIS) are compositionally biased toward low complexity. S83, S84, S88, and S92 each carry phosphoserine. Residues 94–194 (SMDTEASIRE…LRQREEMLEK (101 aa)) adopt a coiled-coil conformation. A Glycyl lysine isopeptide (Lys-Gly) (interchain with G-Cter in SUMO1) cross-link involves residue K249. Composition is skewed to basic and acidic residues over residues 253-262 (VEKVGQRETL) and 277-297 (DCVD…RPVE). The interval 253-738 (VEKVGQRETL…SKSKEDCTMS (486 aa)) is disordered. S302 is modified (phosphoserine). The span at 314–326 (EVQSQDQENTSIL) shows a compositional bias: polar residues. Positions 330-347 (EQIESHEVTNKSDSRDSN) are enriched in basic and acidic residues. Phosphoserine occurs at positions 346 and 348. Positions 371-380 (KNQSENSMDS) are enriched in polar residues. Basic and acidic residues-rich tracts occupy residues 381–400 (QGKE…RPDH) and 467–476 (SERELAHEAA). The DNA-binding stretch occupies residues 479 to 580 (EEALTQSSQA…KNKKKKAAAP (102 aa)). 2 stretches are compositionally biased toward polar residues: residues 483–495 (TQSS…NTVT) and 520–534 (TVQS…PGST). Basic and acidic residues predominate over residues 535–553 (DTKHTSPHAKERNKAKSEQ). 2 positions are modified to phosphoserine: S551 and S560. Residues 563-577 (KKTKNKKKKNKKKKA) are compositionally biased toward basic residues. Residues 606–626 (RVQATDKKWAAETPELKEDPQ) are compositionally biased toward basic and acidic residues. S675 and S701 each carry phosphoserine. Basic and acidic residues-rich tracts occupy residues 691 to 703 (QADE…HSVD) and 720 to 738 (EQAR…CTMS).

This sequence belongs to the LRRFIP family. Homodimer. May also form higher oligomers. Interacts with FLII. Interacts with MYD88. Competes with FLII for MyD88-binding, even in the absence of LPS.

The protein resides in the nucleus. It is found in the cytoplasm. Transcriptional repressor which preferentially binds to the GC-rich consensus sequence (5'-AGCCCCCGGCG-3') and may regulate expression of TNF, EGFR and PDGFA. May control smooth muscle cells proliferation following artery injury through PDGFA repression. May also bind double-stranded RNA. Positively regulates Toll-like receptor (TLR) signaling in response to agonist probably by competing with the negative FLII regulator for MYD88-binding. In Rattus norvegicus (Rat), this protein is Leucine-rich repeat flightless-interacting protein 1 (Lrrfip1).